A 94-amino-acid chain; its full sequence is Co-chaperonin GroES (94 aa).

This sequence belongs to the GroES chaperonin family. In terms of assembly, heptamer of 7 subunits arranged in a ring. Interacts with the chaperonin GroEL.

The protein resides in the cytoplasm. Functionally, together with the chaperonin GroEL, plays an essential role in assisting protein folding. The GroEL-GroES system forms a nano-cage that allows encapsulation of the non-native substrate proteins and provides a physical environment optimized to promote and accelerate protein folding. GroES binds to the apical surface of the GroEL ring, thereby capping the opening of the GroEL channel. The polypeptide is Co-chaperonin GroES (Halalkalibacterium halodurans (strain ATCC BAA-125 / DSM 18197 / FERM 7344 / JCM 9153 / C-125) (Bacillus halodurans)).